The sequence spans 324 residues: Glyoxylate/hydroxypyruvate reductase B (324 aa).

Catalysis depends on residues arginine 237 and glutamate 266. Histidine 285 (proton donor) is an active-site residue.

It belongs to the D-isomer specific 2-hydroxyacid dehydrogenase family. GhrB subfamily. In terms of assembly, homodimer.

It is found in the cytoplasm. The enzyme catalyses glycolate + NADP(+) = glyoxylate + NADPH + H(+). It carries out the reaction (R)-glycerate + NAD(+) = 3-hydroxypyruvate + NADH + H(+). It catalyses the reaction (R)-glycerate + NADP(+) = 3-hydroxypyruvate + NADPH + H(+). In terms of biological role, catalyzes the NADPH-dependent reduction of glyoxylate and hydroxypyruvate into glycolate and glycerate, respectively. This chain is Glyoxylate/hydroxypyruvate reductase B, found in Salmonella typhi.